Consider the following 179-residue polypeptide: Large ribosomal subunit protein uL5 (179 aa).

Belongs to the universal ribosomal protein uL5 family. In terms of assembly, part of the 50S ribosomal subunit; part of the 5S rRNA/L5/L18/L25 subcomplex. Contacts the 5S rRNA and the P site tRNA. Forms a bridge to the 30S subunit in the 70S ribosome.

Its function is as follows. This is one of the proteins that bind and probably mediate the attachment of the 5S RNA into the large ribosomal subunit, where it forms part of the central protuberance. In the 70S ribosome it contacts protein S13 of the 30S subunit (bridge B1b), connecting the 2 subunits; this bridge is implicated in subunit movement. Contacts the P site tRNA; the 5S rRNA and some of its associated proteins might help stabilize positioning of ribosome-bound tRNAs. The sequence is that of Large ribosomal subunit protein uL5 from Agathobacter rectalis (strain ATCC 33656 / DSM 3377 / JCM 17463 / KCTC 5835 / VPI 0990) (Eubacterium rectale).